A 149-amino-acid chain; its full sequence is Nucleoside diphosphate kinase (149 aa).

The ATP site is built by lysine 9, phenylalanine 57, arginine 85, threonine 91, arginine 102, and asparagine 112. The active-site Pros-phosphohistidine intermediate is histidine 115.

It belongs to the NDK family. It depends on Mg(2+) as a cofactor.

Its subcellular location is the cytoplasm. The enzyme catalyses a 2'-deoxyribonucleoside 5'-diphosphate + ATP = a 2'-deoxyribonucleoside 5'-triphosphate + ADP. It carries out the reaction a ribonucleoside 5'-diphosphate + ATP = a ribonucleoside 5'-triphosphate + ADP. Functionally, major role in the synthesis of nucleoside triphosphates other than ATP. The ATP gamma phosphate is transferred to the NDP beta phosphate via a ping-pong mechanism, using a phosphorylated active-site intermediate. The protein is Nucleoside diphosphate kinase of Methanococcoides burtonii (strain DSM 6242 / NBRC 107633 / OCM 468 / ACE-M).